A 475-amino-acid polypeptide reads, in one-letter code: Ribulose bisphosphate carboxylase large chain (475 aa).

Residues 1-2 constitute a propeptide that is removed on maturation; sequence MS. Position 3 is an N-acetylproline (proline 3). Threonine 65, asparagine 123, and threonine 173 together coordinate substrate. Catalysis depends on lysine 175, which acts as the Proton acceptor. Lysine 177 serves as a coordination point for substrate. Residues lysine 201, aspartate 203, and glutamate 204 each contribute to the Mg(2+) site. Lysine 201 bears the N6-carboxylysine mark. The substrate site is built by glutamate 204, histidine 294, arginine 295, histidine 327, lysine 334, serine 379, glycine 381, glycine 403, and glycine 404. The Proton acceptor role is filled by histidine 294.

The protein belongs to the RuBisCO large chain family. Type I subfamily. Heterohexadecamer of 8 large chains and 8 small chains. Requires Mg(2+) as cofactor. In terms of processing, the disulfide bond which can form between Cys-247 in the large chain dimeric partners within the hexadecamer appears to be associated with oxidative stress and protein turnover. The disulfide bonds reported in 1RBO may be the result of oxidation during crystallization.

It is found in the plastid. The protein localises to the chloroplast. The enzyme catalyses 2 (2R)-3-phosphoglycerate + 2 H(+) = D-ribulose 1,5-bisphosphate + CO2 + H2O. The catalysed reaction is D-ribulose 1,5-bisphosphate + O2 = 2-phosphoglycolate + (2R)-3-phosphoglycerate + 2 H(+). With respect to regulation, abscisic acid (ABA) causes weak inhibition of RuBisCO catalytic activity, but more potent inhibition of RuBisCO activation. Its function is as follows. RuBisCO catalyzes two reactions: the carboxylation of D-ribulose 1,5-bisphosphate, the primary event in carbon dioxide fixation, as well as the oxidative fragmentation of the pentose substrate in the photorespiration process. Both reactions occur simultaneously and in competition at the same active site. Binds to abscisic acid (ABA) which has weakly inhibits carboxylation and more strongly inhibits enzyme activation. The protein is Ribulose bisphosphate carboxylase large chain of Spinacia oleracea (Spinach).